Here is a 96-residue protein sequence, read N- to C-terminus: Putative pterin-4-alpha-carbinolamine dehydratase (96 aa).

Belongs to the pterin-4-alpha-carbinolamine dehydratase family.

It catalyses the reaction (4aS,6R)-4a-hydroxy-L-erythro-5,6,7,8-tetrahydrobiopterin = (6R)-L-erythro-6,7-dihydrobiopterin + H2O. The protein is Putative pterin-4-alpha-carbinolamine dehydratase of Prochlorococcus marinus (strain MIT 9301).